A 94-amino-acid polypeptide reads, in one-letter code: Co-chaperonin GroES (94 aa).

Belongs to the GroES chaperonin family. In terms of assembly, heptamer of 7 subunits arranged in a ring. Interacts with the chaperonin GroEL.

It localises to the cytoplasm. Its function is as follows. Together with the chaperonin GroEL, plays an essential role in assisting protein folding. The GroEL-GroES system forms a nano-cage that allows encapsulation of the non-native substrate proteins and provides a physical environment optimized to promote and accelerate protein folding. GroES binds to the apical surface of the GroEL ring, thereby capping the opening of the GroEL channel. The protein is Co-chaperonin GroES of Clostridium botulinum (strain Eklund 17B / Type B).